Here is a 113-residue protein sequence, read N- to C-terminus: Nucleoid-associated protein PMT_0025 (113 aa).

This sequence belongs to the YbaB/EbfC family. As to quaternary structure, homodimer.

The protein localises to the cytoplasm. It is found in the nucleoid. Functionally, binds to DNA and alters its conformation. May be involved in regulation of gene expression, nucleoid organization and DNA protection. The polypeptide is Nucleoid-associated protein PMT_0025 (Prochlorococcus marinus (strain MIT 9313)).